The chain runs to 457 residues: UDP-glycosyltransferase 74C1 (457 aa).

UDP-alpha-D-glucose contacts are provided by residues Thr-281, 336 to 338 (VPQ), 353 to 361 (HCGWNSTLE), and 375 to 378 (WTDQ).

It belongs to the UDP-glycosyltransferase family.

The sequence is that of UDP-glycosyltransferase 74C1 (UGT74C1) from Arabidopsis thaliana (Mouse-ear cress).